A 62-amino-acid chain; its full sequence is uncharacterized protein (62 aa).

A signal peptide spans 1-22 (MVNVALLLDQIIATPLRSMVEA).

This is an uncharacterized protein from Archaeoglobus fulgidus (strain ATCC 49558 / DSM 4304 / JCM 9628 / NBRC 100126 / VC-16).